The chain runs to 358 residues: Magnesium-protoporphyrin IX monomethyl ester [oxidative] cyclase (358 aa).

It belongs to the AcsF family. The cofactor is Fe cation.

The enzyme catalyses Mg-protoporphyrin IX 13-monomethyl ester + 3 NADPH + 3 O2 + 2 H(+) = 3,8-divinyl protochlorophyllide a + 3 NADP(+) + 5 H2O. Its pathway is porphyrin-containing compound metabolism; chlorophyll biosynthesis (light-independent). In terms of biological role, catalyzes the formation of the isocyclic ring in chlorophyll biosynthesis. Mediates the cyclase reaction, which results in the formation of divinylprotochlorophyllide (Pchlide) characteristic of all chlorophylls from magnesium-protoporphyrin IX 13-monomethyl ester (MgPMME). The chain is Magnesium-protoporphyrin IX monomethyl ester [oxidative] cyclase from Trichodesmium erythraeum (strain IMS101).